The chain runs to 201 residues: MNETNDNDIDQLIYLFSKLPGLGIRSARRIALYLLQDKDVRLKSLINNLVEIDKKIVKCEICGNMDTENICRICSSEYRDKSIIAIVETVAELWAMERSGNFKGLYHVFGHNLSAASRQNPSILRLPELLTRCFAENIKEVIIATNSTLEGQTTAYFITEYLKEHPAKISRLASGIPIGGELDYLDDGTVSAAINLRQPFE.

The C4-type zinc finger occupies 59–74; sequence CEICGNMDTENICRIC. The 96-residue stretch at 82 to 177 folds into the Toprim domain; it reads SIIAIVETVA…KISRLASGIP (96 aa).

It belongs to the RecR family.

In terms of biological role, may play a role in DNA repair. It seems to be involved in an RecBC-independent recombinational process of DNA repair. It may act with RecF and RecO. This is Recombination protein RecR from Rickettsia peacockii (strain Rustic).